Here is a 657-residue protein sequence, read N- to C-terminus: Glycogen debranching enzyme (657 aa).

Catalysis depends on aspartate 336, which acts as the Nucleophile. The active-site Proton donor is glutamate 371. Positions 458 to 467 (NEANGEENRD) are enriched in basic and acidic residues. A disordered region spans residues 458–479 (NEANGEENRDGTNNNYSNNHGK).

This sequence belongs to the glycosyl hydrolase 13 family.

The enzyme catalyses Hydrolysis of (1-&gt;6)-alpha-D-glucosidic linkages to branches with degrees of polymerization of three or four glucose residues in limit dextrin.. The protein operates within glycan degradation; glycogen degradation. Removes maltotriose and maltotetraose chains that are attached by 1,6-alpha-linkage to the limit dextrin main chain, generating a debranched limit dextrin. The sequence is that of Glycogen debranching enzyme from Escherichia coli (strain SE11).